Consider the following 380-residue polypeptide: MVKSADLDLMNSIISESDENFSPPPFTVEEAENSINNKSSTASLESPQNGSWHPSLYGLSVPEKTHIQNSLDLYSHGNSGSQKTHNVSFSCEIRKVKSSKLSPISNMEDSEDKKEEDESSSYKNEFKSSSSASVSSNFEKTSGSDDHNSQSPVPLNEGFEYIASSGSEDKNSDEEFAVEMILDSRMKKDGSGFQYYLKWEGYDDPSDNTWNDEEDCAGCLELIDAYWESRGGKPDLSSLIRLTRSRARSSNEASYVEKDESSNSDDSISYKRRRSRNAANRITDYVDSDLSESSMKEKQSKIEKYMKSDKSSKNFKPPFQKKSWEDLVDCVKTVQQLDNGKLIAKIKWKNGYVSTHDNIIIHQKCPLKIIEYYEAHIKFT.

Disordered regions lie at residues 14–58 (ISES…SLYG) and 100–156 (KLSP…VPLN). Positions 33–52 (NSINNKSSTASLESPQNGSW) are enriched in polar residues. Acidic residues predominate over residues 108-119 (EDSEDKKEEDES). The segment covering 121 to 140 (SYKNEFKSSSSASVSSNFEK) has biased composition (low complexity). Residues 176 to 238 (FAVEMILDSR…SRGGKPDLSS (63 aa)) form the Chromo domain. Positions 250–273 (SNEASYVEKDESSNSDDSISYKRR) are disordered.

It is found in the nucleus. Functionally, component of the kinetochore which plays a role in stabilizing microtubules and so allowing accurate chromosome segregation. The sequence is that of Chromo domain-containing protein 2 (chp2) from Schizosaccharomyces pombe (strain 972 / ATCC 24843) (Fission yeast).